We begin with the raw amino-acid sequence, 264 residues long: MYAQPKLTSAEYVQHHMSHWKLNLYNFTFTDGGFWTLNLDTLIISVVLGALFILIFYIVARRATASVPGKWQNAIEMAVEAVDGTVKDSFHGDRSLVAPLALTIFIWVFLMNFMDLVPVDLIPRLFQMGGVEHFKAVPTADPTLTFAMSITVFVLVIFYNFKMKGAIGLGKEVLSRPFGWYLMPINVIFRLIDEGVKPISLALRLFGNLFAGELIFILIALLPWWSQFTLGMVWTLFHLLVITVQAFIFMMLTVVYISLAAESH.

5 consecutive transmembrane segments (helical) span residues 39-59 (LDTL…FYIV), 97-117 (VAPL…MDLV), 139-159 (TADP…VIFY), 205-225 (LFGN…LPWW), and 239-259 (LLVI…YISL).

Belongs to the ATPase A chain family. As to quaternary structure, F-type ATPases have 2 components, CF(1) - the catalytic core - and CF(0) - the membrane proton channel. CF(1) has five subunits: alpha(3), beta(3), gamma(1), delta(1), epsilon(1). CF(0) has three main subunits: a(1), b(2) and c(9-12). The alpha and beta chains form an alternating ring which encloses part of the gamma chain. CF(1) is attached to CF(0) by a central stalk formed by the gamma and epsilon chains, while a peripheral stalk is formed by the delta and b chains.

Its subcellular location is the cell inner membrane. Key component of the proton channel; it plays a direct role in the translocation of protons across the membrane. The sequence is that of ATP synthase subunit a from Coxiella burnetii (strain RSA 331 / Henzerling II).